The primary structure comprises 333 residues: D-alanine--D-alanine ligase (333 aa).

The 206-residue stretch at 124–329 (KMWFSALGIR…FAQYLSGNIM (206 aa)) folds into the ATP-grasp domain. 154–209 (ALEKWGSIFIKAASQGSSVGCYRVDNKEQLANSLEEAFKYSPYVVVEKTINARELE) is a binding site for ATP. Mg(2+) contacts are provided by D283, E296, and N298.

Belongs to the D-alanine--D-alanine ligase family. Mg(2+) is required as a cofactor. It depends on Mn(2+) as a cofactor.

It localises to the cytoplasm. It carries out the reaction 2 D-alanine + ATP = D-alanyl-D-alanine + ADP + phosphate + H(+). Its pathway is cell wall biogenesis; peptidoglycan biosynthesis. In terms of biological role, cell wall formation. The polypeptide is D-alanine--D-alanine ligase (Shewanella halifaxensis (strain HAW-EB4)).